Here is a 276-residue protein sequence, read N- to C-terminus: Imidazole glycerol phosphate synthase subunit HisF (276 aa).

Catalysis depends on residues D11 and D130.

This sequence belongs to the HisA/HisF family. As to quaternary structure, heterodimer of HisH and HisF.

The protein resides in the cytoplasm. The enzyme catalyses 5-[(5-phospho-1-deoxy-D-ribulos-1-ylimino)methylamino]-1-(5-phospho-beta-D-ribosyl)imidazole-4-carboxamide + L-glutamine = D-erythro-1-(imidazol-4-yl)glycerol 3-phosphate + 5-amino-1-(5-phospho-beta-D-ribosyl)imidazole-4-carboxamide + L-glutamate + H(+). It functions in the pathway amino-acid biosynthesis; L-histidine biosynthesis; L-histidine from 5-phospho-alpha-D-ribose 1-diphosphate: step 5/9. Functionally, IGPS catalyzes the conversion of PRFAR and glutamine to IGP, AICAR and glutamate. The HisF subunit catalyzes the cyclization activity that produces IGP and AICAR from PRFAR using the ammonia provided by the HisH subunit. The chain is Imidazole glycerol phosphate synthase subunit HisF from Beijerinckia indica subsp. indica (strain ATCC 9039 / DSM 1715 / NCIMB 8712).